Here is a 515-residue protein sequence, read N- to C-terminus: Chromosomal replication initiator protein DnaA (515 aa).

The domain I, interacts with DnaA modulators stretch occupies residues 1–89 (MVADQAVLSS…LLAISIDANL (89 aa)). The domain II stretch occupies residues 89–172 (LQPPRTPSSE…APPSTSAETS (84 aa)). Disordered stretches follow at residues 90-130 (QPPR…SRRA) and 142-171 (PPADVVPAANAAPNGNGKPTPAPPSTSAET). Low complexity-rich tracts occupy residues 102–114 (SSLAGGPSGAAAP) and 143–160 (PADVVPAANAAPNGNGKP). The tract at residues 173–389 (RLNDRYHFET…GALIRVTAFA (217 aa)) is domain III, AAA+ region. Gly-217, Gly-219, Lys-220, and Thr-221 together coordinate ATP. The domain IV, binds dsDNA stretch occupies residues 390-515 (SLNRQTVDIE…NEIKRKQRGA (126 aa)).

The protein belongs to the DnaA family. As to quaternary structure, oligomerizes as a right-handed, spiral filament on DNA at oriC.

It is found in the cytoplasm. Its function is as follows. Plays an essential role in the initiation and regulation of chromosomal replication. ATP-DnaA binds to the origin of replication (oriC) to initiate formation of the DNA replication initiation complex once per cell cycle. Binds the DnaA box (a 9 base pair repeat at the origin) and separates the double-stranded (ds)DNA. Forms a right-handed helical filament on oriC DNA; dsDNA binds to the exterior of the filament while single-stranded (ss)DNA is stabiized in the filament's interior. The ATP-DnaA-oriC complex binds and stabilizes one strand of the AT-rich DNA unwinding element (DUE), permitting loading of DNA polymerase. After initiation quickly degrades to an ADP-DnaA complex that is not apt for DNA replication. Binds acidic phospholipids. This is Chromosomal replication initiator protein DnaA from Micrococcus luteus (strain ATCC 4698 / DSM 20030 / JCM 1464 / CCM 169 / CCUG 5858 / IAM 1056 / NBRC 3333 / NCIMB 9278 / NCTC 2665 / VKM Ac-2230) (Micrococcus lysodeikticus).